The following is a 435-amino-acid chain: Indole diterpene prenyltransferase atmD (435 aa).

Residues 81 to 82 and Glu90 each bind L-tryptophan; that span reads AY. Substrate contacts are provided by Arg103, Lys190, Arg261, Lys263, Tyr265, Tyr346, and Tyr413.

This sequence belongs to the tryptophan dimethylallyltransferase family.

Functionally, indole diterpene prenyltransferase; part of the ATM2 gene cluster that mediates the biosynthesis of aflatrem, a tremorgenic mycotoxin with acute neurotoxic effects. Synthesis of geranylgeranyl diphosphate (GGPP) by AtmG (a GGPP synthase) precedes condensation of GGPP with indole 3-glycerol phosphate, followed by epoxidation and cyclization by AtmM (a FAD-dependent monooxygenase) and AtmC (a prenyltransferase) to produce paspaline. AtmB is also essential for paspaline production, but its exact role has not been identified yet. AtmP, a cytochrome P450 monooxygenase, subsequently converts paspaline to 13-desoxypaxilline via PC-M6 by removal of the C-30 methyl group and oxidation at C-10. AtmQ, a cytochrome P450 monooxygenase, then catalyzes the oxidation of 13-desoxypaxilline, first at C-7 to produce paspalicine and then at C-13 to form paspalinine. Finally, AtmD prenylates paspalinine to form aflatrem. The chain is Indole diterpene prenyltransferase atmD from Aspergillus flavus.